The following is a 1104-amino-acid chain: General transcription factor II-I repeat domain-containing protein 1 (1104 aa).

Glycyl lysine isopeptide (Lys-Gly) (interchain with G-Cter in SUMO2) cross-links involve residues Lys27, Lys184, Lys212, Lys225, Lys238, Lys271, Lys337, Lys436, Lys439, and Lys443. One copy of the GTF2I-like 1 repeat lies at 119–213 (LEQCSDVYLL…PDDGGQDTKA (95 aa)). Residues 342–436 (IKEMEDINTL…FDERIFTGNK (95 aa)) form a GTF2I-like 2 repeat. The residue at position 448 (Ser448) is a Phosphoserine. The disordered stretch occupies residues 509–559 (SDPSPTSEEMTDSLPGHLPSEDSGYGMEMPADKGPSEEPWSEERPAEESPG). Positions 538-555 (PADKGPSEEPWSEERPAE) are enriched in basic and acidic residues. The GTF2I-like 3 repeat unit spans residues 556-650 (ESPGDVIRPL…ELLTDGVKEP (95 aa)). Glycyl lysine isopeptide (Lys-Gly) (interchain with G-Cter in SUMO2) cross-links involve residues Lys567, Lys579, Lys588, Lys622, Lys638, Lys669, Lys709, Lys717, Lys757, Lys759, and Lys772. Residues 681–775 (LSRIDIANTL…FQGLIPKPET (95 aa)) form a GTF2I-like 4 repeat. The interval 783–802 (EAGKTTRPRRLQQDTWQPDE) is disordered. Residues 805–899 (ANRLGEKVIL…LQPFAEVCND (95 aa)) form a GTF2I-like 5 repeat. Residues Lys841 and Lys901 each participate in a glycyl lysine isopeptide (Lys-Gly) (interchain with G-Cter in SUMO2) cross-link. A GTF2I-like 6 repeat occupies 908 to 1002 (SNKLGKKVIL…LQPFGDVCNN (95 aa)). 2 disordered regions span residues 1001-1044 (NNAK…VAST) and 1058-1104 (LHPN…LPTR). The Nuclear localization signal signature appears at 1012 to 1019 (PKRKRKRV). Residues 1021–1043 (EGNSVSSSSSSSSSSSNPESVAS) show a composition bias toward low complexity.

The protein belongs to the TFII-I family. In terms of assembly, interacts with the retinoblastoma protein (RB1) via its C-terminus. As to expression, widely expressed.

The protein localises to the nucleus. Functionally, may be a transcription regulator involved in cell-cycle progression and skeletal muscle differentiation. May repress GTF2I transcriptional functions, by preventing its nuclear residency, or by inhibiting its transcriptional activation. May contribute to slow-twitch fiber type specificity during myogenesis and in regenerating muscles. Binds troponin I slow-muscle fiber enhancer (USE B1). Binds specifically and with high affinity to the EFG sequences derived from the early enhancer of HOXC8. In Mus musculus (Mouse), this protein is General transcription factor II-I repeat domain-containing protein 1 (Gtf2ird1).